A 189-amino-acid polypeptide reads, in one-letter code: UPF0301 protein CF0373 (189 aa).

This sequence belongs to the UPF0301 (AlgH) family.

The protein is UPF0301 protein CF0373 of Chlamydia felis (strain Fe/C-56) (Chlamydophila felis).